We begin with the raw amino-acid sequence, 412 residues long: D-xylonate dehydratase (412 aa).

In terms of assembly, homooctamer.

The catalysed reaction is D-xylonate = 2-dehydro-3-deoxy-D-arabinonate + H2O. In terms of biological role, NADP-dependent D-xylose dehydrogenase involved in the degradation of D-xylose, a major component of hemicelluloses such as xylan. Catalyzes the third reaction in the xylose utilization pathway through dehydratation of D-xylonate into 2-dehydro-3-deoxy-D-xylonate. The chain is D-xylonate dehydratase from Haloferax volcanii (strain ATCC 29605 / DSM 3757 / JCM 8879 / NBRC 14742 / NCIMB 2012 / VKM B-1768 / DS2) (Halobacterium volcanii).